The chain runs to 346 residues: Very-long-chain 3-oxoacyl-CoA reductase (346 aa).

Residues 26–46 (TASVLLVAGGWFVVSRVWTFL) traverse the membrane as a helical segment. 8 residues coordinate NADP(+): Ile71, Asp126, Asp134, Asn153, Tyr220, Lys224, Ile253, and Ser255. Residue Tyr220 is the Proton donor of the active site. The active-site Lowers pKa of active site Tyr is Lys224.

The protein belongs to the short-chain dehydrogenases/reductases (SDR) family.

The protein resides in the endoplasmic reticulum membrane. The catalysed reaction is a very-long-chain (3R)-3-hydroxyacyl-CoA + NADP(+) = a very-long-chain 3-oxoacyl-CoA + NADPH + H(+). The protein operates within lipid metabolism; fatty acid biosynthesis. Component of the microsomal membrane bound fatty acid elongation system, which produces the 26-carbon very long-chain fatty acids (VLCFA) from palmitate. Catalyzes the reduction of the 3-ketoacyl-CoA intermediate that is formed in each cycle of fatty acid elongation. VLCFAs serve as precursors for ceramide and sphingolipids. This chain is Very-long-chain 3-oxoacyl-CoA reductase, found in Emericella nidulans (strain FGSC A4 / ATCC 38163 / CBS 112.46 / NRRL 194 / M139) (Aspergillus nidulans).